The chain runs to 544 residues: Protein angel homolog 2 (544 aa).

Belongs to the CCR4/nocturin family.

The sequence is that of Protein angel homolog 2 (Angel2) from Mus musculus (Mouse).